We begin with the raw amino-acid sequence, 174 residues long: UPF0316 protein LMOf2365_1801 (174 aa).

A run of 3 helical transmembrane segments spans residues 4 to 24, 36 to 56, and 62 to 82; these read GIFI…IYTV, LAAL…SLVL, and IANV…GMKI.

This sequence belongs to the UPF0316 family.

The protein localises to the cell membrane. This chain is UPF0316 protein LMOf2365_1801, found in Listeria monocytogenes serotype 4b (strain F2365).